The following is a 241-amino-acid chain: Glutathione S-transferase theta-3 (241 aa).

Residues 2 to 82 (GLELYLDLMS…YLSRKYKAPD (81 aa)) enclose the GST N-terminal domain. Glutathione contacts are provided by residues 53–54 (KV) and 66–67 (ES). Residues 88–222 (DLQTRARVDE…VVLKAKDMPP (135 aa)) form the GST C-terminal domain.

It belongs to the GST superfamily. Theta family. Homodimer. As to expression, expressed strongly in liver, and at lower levels in kidney and testis.

The protein resides in the cytoplasm. It catalyses the reaction RX + glutathione = an S-substituted glutathione + a halide anion + H(+). Its function is as follows. Conjugation of reduced glutathione to a wide number of exogenous and endogenous hydrophobic electrophiles. Shows high activity towards 4-nitrobenzyl chloride (4-NBC). Also has lower activity towards 1,2-epoxy-3-(p-nitrophenoxy)propane (EPNP), cumene hydroperoxide, 1-chloro-2,4-dinitrobenzene (CDNB), 7-chloro-4-nitrobenzo-2-oxa-1,3-diazole (NBD-Cl), and ethacrynic acid. This is Glutathione S-transferase theta-3 from Mus musculus (Mouse).